Here is a 981-residue protein sequence, read N- to C-terminus: Alpha-mannosidase (981 aa).

Zn(2+)-binding residues include His23, Asp25, and Asp145. The Nucleophile role is filled by Asp145. Asn312 is a glycosylation site (N-linked (GlcNAc...) asparagine). Residue His386 participates in Zn(2+) binding. 3 disulfide bridges follow: Cys422–Cys432, Cys442–Cys450, and Cys800–Cys807. N-linked (GlcNAc...) asparagine glycosylation is present at Asn446. Residues 938 to 957 form a disordered region; that stretch reads KKMKWSVEGDNEQEPQAVRG.

Belongs to the glycosyl hydrolase 38 family. In terms of assembly, dimer of dimers of heavy and light subunits. It depends on Zn(2+) as a cofactor. Post-translationally, produced as a precursor which is then proteolytically cleaved into a 66kD heavy subunit and a 44kD light subunit. Cleavage probably occurs in protein bodies/protein storage vacuoles.

The protein localises to the protein storage vacuole. The enzyme catalyses Hydrolysis of terminal, non-reducing alpha-D-mannose residues in alpha-D-mannosides.. Its activity is regulated as follows. Inhibited by 2,3,4,6-tetra-O-acetyl-5-fluoro-beta-L-gulopyranosyl fluoride which acts as a slow substrate, doubling as a competitive inhibitor as it forms a high steady state concentration of glycosyl-enzyme intermediate that blocks the active site. Inhibited by 2,3,4,6-tetra-O-acetyl-5-fluoro-alpha-D-mannopyranosyl fluoride which also acts as a slow substrate but no intermediates accumulate. Inhibited by EDTA. Inhibited by metal ion Cu(2+). Inhibited by metal ions Fe(2+), Cd(2+) and Co(2+). Inhibited by metal ions Ag(+) and Hg(2+). Competitively inhibited by mannono-1-4-lactone and mannono-1-5-lactone. Inhibited by swainsonine but not by 1-desoxymannojirimycin. Inhibited by pyrrolidine-3,4-diol derivatives. Its function is as follows. Liberates mannose from p-nitrophenyl-alpha-D-mannoside. Liberates mannose from further alpha-D-mannosides including methyl-, benzyl-alpha-D-mannoside, 1-6-linked di-, tri- and tetrasaccharides of alpha-D-mannose and mannosyl-rhamnose. Liberates mannose from various glycoproteins like ovalbumin and ovomucoid. Does not hydrolyze beta-D-mannosides. Has glycosyltransferase activity, forming disaccharides from mannose and lyxose but not from glucose, galactose, ribose, xylose or arabinose. In Canavalia ensiformis (Jack bean), this protein is Alpha-mannosidase.